The primary structure comprises 144 residues: Large ribosomal subunit protein uL13 (144 aa).

It belongs to the universal ribosomal protein uL13 family. Part of the 50S ribosomal subunit.

Functionally, this protein is one of the early assembly proteins of the 50S ribosomal subunit, although it is not seen to bind rRNA by itself. It is important during the early stages of 50S assembly. In Mycoplasma mobile (strain ATCC 43663 / 163K / NCTC 11711) (Mesomycoplasma mobile), this protein is Large ribosomal subunit protein uL13.